We begin with the raw amino-acid sequence, 156 residues long: MTQSQVTPNAREALTETIVDAKVRKNLTFEAINEGTGLSLAYTTAALLGQHALPEKAAKLVAERLGLDDDAVRLLQTIPVRGSIPGGVPTDPTVYRFYEMVQVYGSTLKALVHEKFGDGIISAINFKLDIQKVPDPEGGERAVITLNGKYLPTKPF.

Catalysis depends on residues arginine 96, glutamate 99, and serine 122.

This sequence belongs to the cyanase family.

It catalyses the reaction cyanate + hydrogencarbonate + 3 H(+) = NH4(+) + 2 CO2. In terms of biological role, catalyzes the reaction of cyanate with bicarbonate to produce ammonia and carbon dioxide. This Burkholderia ambifaria (strain MC40-6) protein is Cyanate hydratase.